The primary structure comprises 542 residues: Chaperonin GroEL (542 aa).

ATP contacts are provided by residues 29–32, 86–90, Gly-413, 476–478, and Asp-492; these read TMGP, DGTTT, and NAA. The disordered stretch occupies residues 521-542; the sequence is KPDPNANNQAPAAPQGGMGGMM. The span at 524–535 shows a compositional bias: low complexity; that stretch reads PNANNQAPAAPQ.

The protein belongs to the chaperonin (HSP60) family. As to quaternary structure, forms a cylinder of 14 subunits composed of two heptameric rings stacked back-to-back. Interacts with the co-chaperonin GroES.

The protein localises to the cytoplasm. The catalysed reaction is ATP + H2O + a folded polypeptide = ADP + phosphate + an unfolded polypeptide.. Its function is as follows. Together with its co-chaperonin GroES, plays an essential role in assisting protein folding. The GroEL-GroES system forms a nano-cage that allows encapsulation of the non-native substrate proteins and provides a physical environment optimized to promote and accelerate protein folding. This is Chaperonin GroEL from Limosilactobacillus reuteri subsp. reuteri (strain JCM 1112) (Lactobacillus reuteri).